The sequence spans 60 residues: Large ribosomal subunit protein uL30 (60 aa).

The protein belongs to the universal ribosomal protein uL30 family. In terms of assembly, part of the 50S ribosomal subunit.

This is Large ribosomal subunit protein uL30 from Desulfitobacterium hafniense (strain DSM 10664 / DCB-2).